A 32-amino-acid chain; its full sequence is ilv operon leader peptide (32 aa).

This protein is involved in control of the biosynthesis of isoleucine, leucine, and valine. This is ilv operon leader peptide (ivbL) from Escherichia coli (strain K12).